The following is a 1381-amino-acid chain: Hepatocyte growth factor receptor (1381 aa).

The signal sequence occupies residues 1-24 (MKAPAVLVPGILVLLFTLVQRSNG). Over 25–932 (ECKEALAKSE…VIVQPDQNFT (908 aa)) the chain is Extracellular. The 489-residue stretch at 27-515 (KEALAKSEMN…TGKKITKIPL (489 aa)) folds into the Sema domain. The N-linked (GlcNAc...) asparagine glycan is linked to N45. 4 disulfide bridges follow: C95–C101, C98–C160, C133–C141, and C172–C175. N106 carries N-linked (GlcNAc...) asparagine glycosylation. The N-linked (GlcNAc...) asparagine glycan is linked to N149. N202 carries N-linked (GlcNAc...) asparagine glycosylation. 2 disulfide bridges follow: C298/C363 and C385/C397. 2 N-linked (GlcNAc...) asparagine glycosylation sites follow: N399 and N405. Cystine bridges form between C520–C538, C526–C561, C529–C545, and C541–C551. 3 consecutive IPT/TIG domains span residues 563-655 (PAIY…FSYV), 657-739 (PIIT…FSYR), and 742-836 (PIVY…LIYV). O-linked (Man) threonine glycosylation is present at T582. N607 and N635 each carry an N-linked (GlcNAc...) asparagine glycan. Residues T676 and T761 are each glycosylated (O-linked (Man) threonine). N-linked (GlcNAc...) asparagine glycans are attached at residues N785, N879, and N930. Residues 933–955 (GLIAGVVSISIALLLLLGLFLWL) form a helical membrane-spanning segment. Topologically, residues 956-1381 (KKRKQIKDLG…EDNADDEVDT (426 aa)) are cytoplasmic. The residue at position 966 (S966) is a Phosphoserine. The residue at position 977 (T977) is a Phosphothreonine. Phosphoserine occurs at positions 990, 997, and 1000. At Y1003 the chain carries Phosphotyrosine. Positions 1078-1345 (VHFNEVIGRG…RISAIFSTFI (268 aa)) constitute a Protein kinase domain. Residues 1084 to 1092 (IGRGHFGCV) and K1110 each bind ATP. Residue D1204 is the Proton acceptor of the active site. Residues 1212–1381 (LDEKFTVKVA…EDNADDEVDT (170 aa)) are interaction with RANBP9. The residue at position 1230 (Y1230) is a Phosphotyrosine. A phosphotyrosine; by autocatalysis mark is found at Y1234 and Y1235. T1289 bears the Phosphothreonine mark. Residues 1320 to 1359 (WHPKAEMRPSFSELVSRISAIFSTFIGEHYVHVNATYVNV) are interaction with MUC20. A phosphotyrosine; by autocatalysis mark is found at Y1349 and Y1356. Y1365 carries the post-translational modification Phosphotyrosine.

This sequence belongs to the protein kinase superfamily. Tyr protein kinase family. Heterodimer made of an alpha chain (50 kDa) and a beta chain (145 kDa) which are disulfide linked. Binds PLXNB1. Interacts when phosphorylated with downstream effectors including STAT3, PIK3R1, SRC, PCLG1, GRB2 and GAB1. Interacts with SPSB1, SPSB2 and SPSB4. Interacts with INPP5D/SHIP1. When phosphorylated at Tyr-1356, interacts with INPPL1/SHIP2. Interacts with RANBP9 and RANBP10, as well as SPSB1, SPSB2, SPSB3 and SPSB4. SPSB1 binding occurs in the presence and in the absence of HGF, however HGF treatment has a positive effect on this interaction. Interacts with MUC20; prevents interaction with GRB2 and suppresses hepatocyte growth factor-induced cell proliferation. Interacts with GRB10. Interacts with PTPN1 and PTPN2. Interacts with HSP90AA1 and HSP90AB1; the interaction suppresses MET kinase activity. Interacts with tensin TNS3. Interacts (when phosphorylated) with tensin TNS4 (via SH2 domain); the interaction increases MET protein stability by inhibiting MET endocytosis and subsequent lysosomal degradation. Autophosphorylated in response to ligand binding on Tyr-1234 and Tyr-1235 in the kinase domain leading to further phosphorylation of Tyr-1349 and Tyr-1356 in the C-terminal multifunctional docking site. Dephosphorylated by PTPRJ at Tyr-1349 and Tyr-1365. Dephosphorylated by PTPN1 and PTPN2. In terms of processing, ubiquitinated. Ubiquitination by CBL regulates the receptor stability and activity through proteasomal degradation. Post-translationally, O-mannosylation of IPT/TIG domains by TMEM260 is required for protein maturation. O-mannosylated residues are composed of single mannose glycans that are not elongated or modified.

It localises to the membrane. The catalysed reaction is L-tyrosyl-[protein] + ATP = O-phospho-L-tyrosyl-[protein] + ADP + H(+). With respect to regulation, in its inactive state, the C-terminal tail interacts with the catalytic domain and inhibits the kinase activity. Upon ligand binding, the C-terminal tail is displaced and becomes phosphorylated, thus increasing the kinase activity. Functionally, receptor tyrosine kinase that transduces signals from the extracellular matrix into the cytoplasm by binding to hepatocyte growth factor/HGF ligand. Regulates many physiological processes including proliferation, scattering, morphogenesis and survival. Ligand binding at the cell surface induces autophosphorylation of MET on its intracellular domain that provides docking sites for downstream signaling molecules. Following activation by ligand, interacts with the PI3-kinase subunit PIK3R1, PLCG1, SRC, GRB2, STAT3 or the adapter GAB1. Recruitment of these downstream effectors by MET leads to the activation of several signaling cascades including the RAS-ERK, PI3 kinase-AKT, or PLCgamma-PKC. The RAS-ERK activation is associated with the morphogenetic effects while PI3K/AKT coordinates prosurvival effects. During embryonic development, MET signaling plays a role in gastrulation, development and migration of muscles and neuronal precursors, angiogenesis and kidney formation. In adults, participates in wound healing as well as organ regeneration and tissue remodeling. Also promotes differentiation and proliferation of hematopoietic cells. The protein is Hepatocyte growth factor receptor (MET) of Papio anubis (Olive baboon).